The sequence spans 67 residues: Archaeal histone HAN1 subunit A (67 aa).

2 interaction with DNA regions span residues 20-22 (RVS) and 54-57 (KTVK).

Belongs to the archaeal histone HMF family. As to quaternary structure, heterodimer. Dimers then assemble into higher oligomers, with the DNA wrapped around the protein core.

It is found in the cytoplasm. It localises to the chromosome. Binds and compact DNA (95 to 150 base pairs) to form nucleosome-like structures that contain positive DNA supercoils. Increases the resistance of DNA to thermal denaturation (in vitro). This Thermococcus zilligii protein is Archaeal histone HAN1 subunit A (han1A).